A 208-amino-acid polypeptide reads, in one-letter code: Calaxin (208 aa).

EF-hand domains follow at residues 64–99, 100–135, and 145–180; these read TDDM…FLHG, TLEE…SLLK, and GVKD…ENLL. Ca(2+) contacts are provided by D77, D79, D81, D113, N115, D117, Y119, E124, D158, D160, D162, K164, and D169.

In terms of assembly, component of the outer dynein arm-docking complex along with ODAD1, ODAD2, ODAD3 and ODAD4.

The protein resides in the cytoplasm. It is found in the cytoskeleton. Its subcellular location is the cilium axoneme. The protein localises to the cell projection. It localises to the cilium. The protein resides in the flagellum. Functionally, component of the outer dynein arm-docking complex (ODA-DC) that mediates outer dynein arms (ODA) binding onto the doublet microtubule. Seems to regulate the assembly of both ODAs and their axonemal docking complex onto ciliary microtubules. Regulates ciliary and flagellar motility and is required for cilia-driven determination of body laterality. The sequence is that of Calaxin (clxn) from Xenopus laevis (African clawed frog).